Here is a 515-residue protein sequence, read N- to C-terminus: SWI/SNF-related matrix-associated actin-dependent regulator of chromatin subfamily D member 1 (515 aa).

Positions 1–128 are disordered; sequence MAARAGFQSV…RNHNAKKKKM (128 aa). The segment covering 14–23 has biased composition (gly residues); the sequence is GGAGASGGAG. An interaction with ESR1, NR1H4, NR3C1, PGR and SMARCA4 region spans residues 43-167; the sequence is APGQGLYRSP…DQTIMRKRLD (125 aa). Arg68 and Arg88 each carry asymmetric dimethylarginine. A Glycyl lysine isopeptide (Lys-Gly) (interchain with G-Cter in SUMO2) cross-link involves residue Lys101. The span at 104 to 117 shows a compositional bias: low complexity; the sequence is APQQIQQVQQQAVQ. The interaction with SMARCC1 and SMARCC2 stretch occupies residues 168 to 474; the sequence is IQEALKRPIK…TMTDVVGNPE (307 aa). Positions 180–515 are necessary for GR/NR3C1-mediated remodeling and transcription from chromatin; required for GR/NR3C1 interaction with the BRG1/SMARCA4 complex in vivo; sequence RKLRIFISNT…LEQALGIRNT (336 aa). A Phosphothreonine modification is found at Thr203. Position 223 is an N6-acetyllysine (Lys223). Residues 290-367 form the SWIB/MDM2 domain; that stretch reads YQPPQFKLDP…PQRLHALLMP (78 aa). Residues 412-440 are a coiled coil; it reads ASQQEIATLDNKIHETIETINQLKTQREF.

This sequence belongs to the SMARCD family. In terms of assembly, component of the multiprotein chromatin-remodeling complexes SWI/SNF: SWI/SNF-A (BAF), SWI/SNF-B (PBAF) and related complexes. The canonical complex contains a catalytic subunit (either SMARCA4/BRG1/BAF190A or SMARCA2/BRM/BAF190B), and at least SMARCE1, ACTL6A/BAF53, SMARCC1/BAF155, SMARCC2/BAF170, and SMARCB1/SNF5/BAF47. Other subunits specific to each of the complexes may also be present permitting several possible combinations developmentally and tissue specific. Component of the BAF complex, which includes at least actin (ACTB), ARID1A/BAF250A, ARID1B/BAF250B, SMARCA2/BRM, SMARCA4/BRG1/BAF190A, ACTL6A/BAF53, ACTL6B/BAF53B, SMARCE1/BAF57, SMARCC1/BAF155, SMARCC2/BAF170, SMARCB1/SNF5/INI1, and one or more SMARCD1/BAF60A, SMARCD2/BAF60B, or SMARCD3/BAF60C. In muscle cells, the BAF complex also contains DPF3. Component of neural progenitors-specific chromatin remodeling complex (npBAF complex) composed of at least, ARID1A/BAF250A or ARID1B/BAF250B, SMARCD1/BAF60A, SMARCD3/BAF60C, SMARCA2/BRM/BAF190B, SMARCA4/BRG1/BAF190A, SMARCB1/BAF47, SMARCC1/BAF155, SMARCE1/BAF57, SMARCC2/BAF170, PHF10/BAF45A, ACTL6A/BAF53A and actin. Component of neuron-specific chromatin remodeling complex (nBAF complex) composed of at least, ARID1A/BAF250A or ARID1B/BAF250B, SMARCD1/BAF60A, SMARCD3/BAF60C, SMARCA2/BRM/BAF190B, SMARCA4/BRG1/BAF190A, SMARCB1/BAF47, SMARCC1/BAF155, SMARCE1/BAF57, SMARCC2/BAF170, DPF1/BAF45B, DPF3/BAF45C, ACTL6B/BAF53B and actin. Component of the SWI/SNF-B (PBAF) chromatin remodeling complex, at least composed of SMARCA4/BRG1, SMARCB1/BAF47/SNF5, ACTL6A/BAF53A or ACTL6B/BAF53B, SMARCE1/BAF57, SMARCD1/BAF60A, SMARCD2/BAF60B, perhaps SMARCD3/BAF60C, SMARCC1/BAF155, SMARCC2/BAF170, PBRM1/BAF180, ARID2/BAF200 and actin (ACTB). Component of SWI/SNF (GBAF) subcomplex, which includes at least BICRA or BICRAL (mutually exclusive), BRD9, SS18, SMARCA2/BRM, SMARCA4/BRG1/BAF190A, ACTL6A/BAF53, SMARCC1/BAF155, and SMARCD1/BAF60A. Specifically interacts with the VDR heterodimer complex. Interacts with ESR1, NR3C1, NR1H4, PGR, SMARCA4, SMARCC1 and SMARCC2. Interacts with DPF2. Interacts with DPF3a (isoform 2 of DPF3/BAF45C) and with HDGFL2 in a DPF3a-dependent manner. Interacts with FOS, FOSB isoform 1 and 2, FOSL1 and FOSL2. Interacts with AKIRIN2. In terms of tissue distribution, ubiquitous.

Its subcellular location is the nucleus. Functionally, involved in transcriptional activation and repression of select genes by chromatin remodeling (alteration of DNA-nucleosome topology). Component of SWI/SNF chromatin remodeling complexes that carry out key enzymatic activities, changing chromatin structure by altering DNA-histone contacts within a nucleosome in an ATP-dependent manner. Belongs to the neural progenitors-specific chromatin remodeling complex (npBAF complex) and the neuron-specific chromatin remodeling complex (nBAF complex). During neural development a switch from a stem/progenitor to a postmitotic chromatin remodeling mechanism occurs as neurons exit the cell cycle and become committed to their adult state. The transition from proliferating neural stem/progenitor cells to postmitotic neurons requires a switch in subunit composition of the npBAF and nBAF complexes. As neural progenitors exit mitosis and differentiate into neurons, npBAF complexes which contain ACTL6A/BAF53A and PHF10/BAF45A, are exchanged for homologous alternative ACTL6B/BAF53B and DPF1/BAF45B or DPF3/BAF45C subunits in neuron-specific complexes (nBAF). The npBAF complex is essential for the self-renewal/proliferative capacity of the multipotent neural stem cells. The nBAF complex along with CREST plays a role regulating the activity of genes essential for dendrite growth. Has a strong influence on vitamin D-mediated transcriptional activity from an enhancer vitamin D receptor element (VDRE). May be a link between mammalian SWI-SNF-like chromatin remodeling complexes and the vitamin D receptor (VDR) heterodimer. Mediates critical interactions between nuclear receptors and the BRG1/SMARCA4 chromatin-remodeling complex for transactivation. This is SWI/SNF-related matrix-associated actin-dependent regulator of chromatin subfamily D member 1 (Smarcd1) from Mus musculus (Mouse).